A 370-amino-acid chain; its full sequence is tRNA/tmRNA (uracil-C(5))-methyltransferase (370 aa).

S-adenosyl-L-methionine contacts are provided by glutamine 195, tyrosine 221, asparagine 226, glutamate 242, and aspartate 302. Catalysis depends on cysteine 327, which acts as the Nucleophile. The active-site Proton acceptor is the glutamate 361.

Belongs to the class I-like SAM-binding methyltransferase superfamily. RNA M5U methyltransferase family. TrmA subfamily.

The catalysed reaction is uridine(54) in tRNA + S-adenosyl-L-methionine = 5-methyluridine(54) in tRNA + S-adenosyl-L-homocysteine + H(+). It catalyses the reaction uridine(341) in tmRNA + S-adenosyl-L-methionine = 5-methyluridine(341) in tmRNA + S-adenosyl-L-homocysteine + H(+). In terms of biological role, dual-specificity methyltransferase that catalyzes the formation of 5-methyluridine at position 54 (m5U54) in all tRNAs, and that of position 341 (m5U341) in tmRNA (transfer-mRNA). The chain is tRNA/tmRNA (uracil-C(5))-methyltransferase from Wolinella succinogenes (strain ATCC 29543 / DSM 1740 / CCUG 13145 / JCM 31913 / LMG 7466 / NCTC 11488 / FDC 602W) (Vibrio succinogenes).